The sequence spans 353 residues: Photosystem II D2 protein (353 aa).

N-acetylthreonine is present on Thr-2. Residue Thr-2 is modified to Phosphothreonine. The helical transmembrane segment at 41–61 (CAYFAVGGWFTGTTFVTSWYT) threads the bilayer. Position 118 (His-118) interacts with chlorophyll a. Residues 125–141 (GFMLRQFELARSVQLRP) traverse the membrane as a helical segment. Residues Gln-130 and Asn-143 each contribute to the pheophytin a site. A helical membrane pass occupies residues 153-166 (VFVSVFLIYPLGQS). A chlorophyll a-binding site is contributed by His-198. The helical transmembrane segment at 208 to 228 (AALLCAIHGATVENTLFEDGD) threads the bilayer. Residues His-215 and Phe-262 each coordinate a plastoquinone. His-215 is a Fe cation binding site. His-269 contributes to the Fe cation binding site. The helical transmembrane segment at 279 to 295 (GLWMSALGVVGLALNLR) threads the bilayer.

It belongs to the reaction center PufL/M/PsbA/D family. PSII is composed of 1 copy each of membrane proteins PsbA, PsbB, PsbC, PsbD, PsbE, PsbF, PsbH, PsbI, PsbJ, PsbK, PsbL, PsbM, PsbT, PsbX, PsbY, PsbZ, Psb30/Ycf12, at least 3 peripheral proteins of the oxygen-evolving complex and a large number of cofactors. It forms dimeric complexes. The D1/D2 heterodimer binds P680, chlorophylls that are the primary electron donor of PSII, and subsequent electron acceptors. It shares a non-heme iron and each subunit binds pheophytin, quinone, additional chlorophylls, carotenoids and lipids. There is also a Cl(-1) ion associated with D1 and D2, which is required for oxygen evolution. The PSII complex binds additional chlorophylls, carotenoids and specific lipids. is required as a cofactor.

The protein resides in the plastid. Its subcellular location is the chloroplast thylakoid membrane. The enzyme catalyses 2 a plastoquinone + 4 hnu + 2 H2O = 2 a plastoquinol + O2. Functionally, photosystem II (PSII) is a light-driven water:plastoquinone oxidoreductase that uses light energy to abstract electrons from H(2)O, generating O(2) and a proton gradient subsequently used for ATP formation. It consists of a core antenna complex that captures photons, and an electron transfer chain that converts photonic excitation into a charge separation. The D1/D2 (PsbA/PsbD) reaction center heterodimer binds P680, the primary electron donor of PSII as well as several subsequent electron acceptors. D2 is needed for assembly of a stable PSII complex. This chain is Photosystem II D2 protein, found in Ipomoea purpurea (Common morning glory).